We begin with the raw amino-acid sequence, 318 residues long: Transaldolase (318 aa).

Lys132 serves as the catalytic Schiff-base intermediate with substrate.

Belongs to the transaldolase family. Type 1 subfamily. As to quaternary structure, homodimer.

It is found in the cytoplasm. It catalyses the reaction D-sedoheptulose 7-phosphate + D-glyceraldehyde 3-phosphate = D-erythrose 4-phosphate + beta-D-fructose 6-phosphate. It participates in carbohydrate degradation; pentose phosphate pathway; D-glyceraldehyde 3-phosphate and beta-D-fructose 6-phosphate from D-ribose 5-phosphate and D-xylulose 5-phosphate (non-oxidative stage): step 2/3. Transaldolase is important for the balance of metabolites in the pentose-phosphate pathway. This chain is Transaldolase, found in Shewanella oneidensis (strain ATCC 700550 / JCM 31522 / CIP 106686 / LMG 19005 / NCIMB 14063 / MR-1).